A 145-amino-acid polypeptide reads, in one-letter code: Endoribonuclease YbeY (145 aa).

3 residues coordinate Zn(2+): His-109, His-113, and His-119.

It belongs to the endoribonuclease YbeY family. Zn(2+) serves as cofactor.

The protein resides in the cytoplasm. Functionally, single strand-specific metallo-endoribonuclease involved in late-stage 70S ribosome quality control and in maturation of the 3' terminus of the 16S rRNA. This is Endoribonuclease YbeY from Vesicomyosocius okutanii subsp. Calyptogena okutanii (strain HA).